Consider the following 375-residue polypeptide: GTPase HflX (375 aa).

One can recognise a Hflx-type G domain in the interval 194–371 (PHIAIVGYAS…RIATLLAGTK (178 aa)). GTP is bound by residues 200 to 207 (GYASAGKT), 225 to 229 (FTTIT), 246 to 249 (DTVG), 314 to 317 (NKID), and 349 to 351 (SAK). Mg(2+) is bound by residues threonine 207 and threonine 227.

It belongs to the TRAFAC class OBG-HflX-like GTPase superfamily. HflX GTPase family. As to quaternary structure, monomer. Associates with the 50S ribosomal subunit. The cofactor is Mg(2+).

It is found in the cytoplasm. Its function is as follows. GTPase that associates with the 50S ribosomal subunit and may have a role during protein synthesis or ribosome biogenesis. In Hyperthermus butylicus (strain DSM 5456 / JCM 9403 / PLM1-5), this protein is GTPase HflX.